The chain runs to 150 residues: UPF0756 membrane protein PMI1560 (150 aa).

4 helical membrane passes run Gly16–Ile36, Tyr51–Gly71, Phe82–Ala102, and Val123–Leu143.

The protein belongs to the UPF0756 family.

The protein localises to the cell membrane. The sequence is that of UPF0756 membrane protein PMI1560 from Proteus mirabilis (strain HI4320).